The following is a 157-amino-acid chain: Ribosome maturation factor RimP (157 aa).

The protein belongs to the RimP family.

It is found in the cytoplasm. Its function is as follows. Required for maturation of 30S ribosomal subunits. This chain is Ribosome maturation factor RimP, found in Helicobacter hepaticus (strain ATCC 51449 / 3B1).